A 1403-amino-acid polypeptide reads, in one-letter code: Sushi, nidogen and EGF-like domain-containing protein 1 (1403 aa).

The N-terminal stretch at 1–24 (MRRGAAWALLLAAALGLGARGVRA) is a signal peptide. The NIDO domain maps to 103-258 (AFWADVDNRR…GRWAFRIDDA (156 aa)). EGF-like domains are found at residues 268 to 309 (TTSV…RRCH), 311 to 347 (DVNE…PTCE), and 349 to 385 (AQSP…ATCE). Cystine bridges form between C272/C284, C278/C297, C299/C308, C315/C326, C320/C335, C337/C346, C353/C364, C358/C373, C375/C384, C391/C402, C396/C411, C413/C422, C433/C444, C438/C453, C455/C464, C472/C480, C474/C488, and C490/C499. N-linked (GlcNAc...) asparagine glycosylation occurs at N292. The region spanning 387–423 (DVDECSSDPCLNGGSCVDLVGNYSCICVEPFEGPQCE) is the EGF-like 4; calcium-binding domain. N-linked (GlcNAc...) asparagine glycosylation occurs at N408. 2 consecutive EGF-like domains span residues 429-465 (VPSP…LDCR) and 468-500 (ILND…LLCE). A glycan (N-linked (GlcNAc...) asparagine) is linked at N484. An N-linked (GlcNAc...) asparagine glycan is attached at N536. 4 consecutive EGF-like domains span residues 541–577 (LPSP…RHCE), 580–616 (RPHL…RHCE), 619–655 (KPDS…RHCE), and 657–693 (APSP…HRCQ). Cystine bridges form between C545-C556, C550-C565, C567-C576, C584-C595, C589-C604, C606-C615, C623-C634, C628-C643, C645-C654, C661-C672, C666-C681, C683-C692, C698-C739, C724-C751, C757-C768, C762-C777, C779-C788, C795-C806, C800-C815, C817-C826, C833-C844, C838-C853, C855-C864, C871-C882, C876-C891, and C893-C902. The 58-residue stretch at 696–753 (VDCGQPEEVKHATMRLNGTRMGSVALYTCDPGFSLSVLSHMRVCQPQGVWSQPPQCIE) folds into the Sushi domain. The N-linked (GlcNAc...) asparagine glycan is linked to N712. In terms of domain architecture, EGF-like 11; calcium-binding spans 753 to 789 (EVDECQSQPCLHKGSCQDLIAGYQCLCSPGYEGVHCE). Residues 791-827 (ETDECQAQPCRNGGSCRDLPGAFICQCPEGFVGTHCE) enclose the EGF-like 12; calcium-binding domain. EGF-like domains are found at residues 829–865 (EVDA…YNCE) and 867–903 (VSDP…KDCT). N886 is a glycosylation site (N-linked (GlcNAc...) asparagine). 3 consecutive Fibronectin type-III domains span residues 908–1006 (PPTA…TRPR), 1007–1105 (PIED…TRPL), and 1106–1200 (PPAN…SPRD). N977, N1015, N1109, N1139, and N1298 each carry an N-linked (GlcNAc...) asparagine glycan. The tract at residues 1295–1314 (LPKNNSKDTESTPGSCSEDT) is disordered. Polar residues predominate over residues 1305-1314 (STPGSCSEDT). One can recognise an EGF-like 15 domain in the interval 1306–1342 (TPGSCSEDTCQNGGTCVPGANAHSCDCRPGFKGRHCE). Cystine bridges form between C1310–C1321, C1315–C1330, and C1332–C1341.

Post-translationally, phosphorylated on serine and threonine residues. In terms of processing, N-glycosylated. As to expression, expressed in liver.

The protein localises to the secreted. It localises to the extracellular space. The protein resides in the extracellular matrix. This is Sushi, nidogen and EGF-like domain-containing protein 1 from Rattus norvegicus (Rat).